A 349-amino-acid chain; its full sequence is Nuclear distribution protein nudE homolog 1 (349 aa).

Residues Ala-23 to Lys-189 are a coiled coil. Residues Ala-182–Arg-201 form a disordered region.

This sequence belongs to the nudE family. In terms of assembly, self-associates. Interacts with pafah1b1. Post-translationally, phosphorylated in mitosis.

It localises to the cytoplasm. The protein resides in the cytoskeleton. The protein localises to the microtubule organizing center. Its subcellular location is the centrosome. It is found in the spindle. It localises to the chromosome. The protein resides in the centromere. The protein localises to the kinetochore. Its subcellular location is the cleavage furrow. It is found in the cytoplasmic vesicle membrane. Its function is as follows. Required for centrosome duplication and formation and function of the mitotic spindle. This chain is Nuclear distribution protein nudE homolog 1 (nde1), found in Xenopus tropicalis (Western clawed frog).